The chain runs to 102 residues: Lipopolysaccharide assembly protein A (102 aa).

Residues 1 to 2 (MK) are Cytoplasmic-facing. A helical transmembrane segment spans residues 3–23 (YLLIFLLVLAIFVISVTLGAQ). Over 24–43 (NDQQVTFNYLLAQGEYRIST) the chain is Periplasmic. The chain crosses the membrane as a helical span at residues 44 to 64 (LLAVLFAAGFAIGWLICGLFW). Residues 64–92 (WLRVRVSLARAERKIKRLENQLSPATDVA) adopt a coiled-coil conformation. The Cytoplasmic portion of the chain corresponds to 65-102 (LRVRVSLARAERKIKRLENQLSPATDVAVVPHSSAAKE).

The protein belongs to the LapA family.

The protein resides in the cell inner membrane. Its function is as follows. Involved in the assembly of lipopolysaccharide (LPS). The protein is Lipopolysaccharide assembly protein A of Escherichia coli (strain K12).